The chain runs to 84 residues: Toxin Cex12 (84 aa).

Positions 1–19 (MNSLLMITTCLILVGTVWA) are cleaved as a signal peptide. The LCN-type CS-alpha/beta domain maps to 20–83 (NDGYLFDKRK…ISRTPGKTCR (64 aa)). 4 disulfides stabilise this stretch: Cys-31–Cys-82, Cys-35–Cys-58, Cys-44–Cys-63, and Cys-48–Cys-65.

The protein belongs to the long (4 C-C) scorpion toxin superfamily. Sodium channel inhibitor family. Beta subfamily. As to expression, expressed by the venom gland.

It localises to the secreted. Functionally, beta toxins bind voltage-independently at site-4 of sodium channels (Nav) and shift the voltage of activation toward more negative potentials thereby affecting sodium channel activation and promoting spontaneous and repetitive firing. In Centruroides exilicauda (Bark scorpion), this protein is Toxin Cex12.